The primary structure comprises 578 residues: Triokinase/FMN cyclase (578 aa).

The region spanning Ser9–Trp336 is the DhaK domain. Dihydroxyacetone is bound by residues Gly56–His59, Lys109, and Asp114. His221 (tele-hemiaminal-histidine intermediate) is an active-site residue. Position 350 is a phosphoserine (Ser350). Residues Lys372 to Glu571 form the DhaL domain. Residues Asp401 to Cys404, Ser446 to Ser447, Gly486, and Thr494 to Met495 each bind ATP. 2 positions are modified to phosphoserine: Ser511 and Ser545. Asp556–Gly558 contributes to the ATP binding site.

In terms of assembly, homodimer. Interacts with IFIH1 (via the CARD domains), the interaction is inhibited by viral infection. Requires Mg(2+) as cofactor. Mn(2+) serves as cofactor. It depends on Co(2+) as a cofactor.

It carries out the reaction dihydroxyacetone + ATP = dihydroxyacetone phosphate + ADP + H(+). It catalyses the reaction D-glyceraldehyde + ATP = D-glyceraldehyde 3-phosphate + ADP + H(+). The enzyme catalyses FAD = riboflavin cyclic-4',5'-phosphate + AMP + H(+). Its activity is regulated as follows. Each activity is inhibited by the substrate(s) of the other. Functionally, catalyzes both the phosphorylation of dihydroxyacetone and of glyceraldehyde, and the splitting of ribonucleoside diphosphate-X compounds among which FAD is the best substrate. Represses IFIH1-mediated cellular antiviral response. The chain is Triokinase/FMN cyclase (TKFC) from Bos taurus (Bovine).